A 113-amino-acid chain; its full sequence is MSIPVMQLKHELALKAREEYLRKELPLKVRANTSRMNPGAKTWIPQINHRKSRNHYNRKETCQFPPLYNVEAKINHSYSAFYRPFTKRENGLWYANPYYMQHGPNGNYHHVYY.

The protein localises to the mitochondrion. Functionally, has a role in meiosis. In Schizosaccharomyces pombe (strain 972 / ATCC 24843) (Fission yeast), this protein is Meiotically up-regulated gene 98 protein, mitochondrial (mug98).